A 166-amino-acid chain; its full sequence is Regulatory protein RecX (166 aa).

This sequence belongs to the RecX family.

It is found in the cytoplasm. In terms of biological role, modulates RecA activity. The sequence is that of Regulatory protein RecX from Klebsiella pneumoniae (strain 342).